The sequence spans 234 residues: 2,3-bisphosphoglycerate-dependent phosphoglycerate mutase (234 aa).

Substrate-binding positions include 8-15 (RHGESVWN), 21-22 (TG), arginine 60, 87-90 (ERHY), lysine 98, 114-115 (RR), and 183-184 (GN). Histidine 9 serves as the catalytic Tele-phosphohistidine intermediate. Glutamate 87 functions as the Proton donor/acceptor in the catalytic mechanism.

It belongs to the phosphoglycerate mutase family. BPG-dependent PGAM subfamily. In terms of assembly, homodimer.

It catalyses the reaction (2R)-2-phosphoglycerate = (2R)-3-phosphoglycerate. Its pathway is carbohydrate degradation; glycolysis; pyruvate from D-glyceraldehyde 3-phosphate: step 3/5. Catalyzes the interconversion of 2-phosphoglycerate and 3-phosphoglycerate. The sequence is that of 2,3-bisphosphoglycerate-dependent phosphoglycerate mutase from Citrifermentans bemidjiense (strain ATCC BAA-1014 / DSM 16622 / JCM 12645 / Bem) (Geobacter bemidjiensis).